Here is a 367-residue protein sequence, read N- to C-terminus: 5-amino-6-(D-ribitylamino)uracil--L-tyrosine 4-hydroxyphenyl transferase (367 aa).

Positions 56–290 (VTYVRNQNIN…MFAVARLFLD (235 aa)) constitute a Radical SAM core domain. [4Fe-4S] cluster contacts are provided by cysteine 70, cysteine 74, and cysteine 77.

Belongs to the radical SAM superfamily. CofH family. Consists of two subunits, CofG and CofH. [4Fe-4S] cluster is required as a cofactor.

It catalyses the reaction 5-amino-6-(D-ribitylamino)uracil + L-tyrosine + S-adenosyl-L-methionine = 5-amino-5-(4-hydroxybenzyl)-6-(D-ribitylimino)-5,6-dihydrouracil + 2-iminoacetate + 5'-deoxyadenosine + L-methionine + H(+). The protein operates within cofactor biosynthesis; coenzyme F0 biosynthesis. Functionally, catalyzes the radical-mediated synthesis of 5-amino-5-(4-hydroxybenzyl)-6-(D-ribitylimino)-5,6-dihydrouracil from 5-amino-6-(D-ribitylamino)uracil and L-tyrosine. This is 5-amino-6-(D-ribitylamino)uracil--L-tyrosine 4-hydroxyphenyl transferase from Methanoculleus marisnigri (strain ATCC 35101 / DSM 1498 / JR1).